Reading from the N-terminus, the 374-residue chain is Severin (374 aa).

3 Gelsolin-like repeats span residues 58–109 (FTLE…DEYG), 180–220 (EGKT…KCSA), and 278–369 (EVIK…SFLK).

Belongs to the villin/gelsolin family.

Its function is as follows. Severin blocks the ends of F-actin and causes the fragmentation and depolymerization of actin filaments. This severin binds stably with actin both in a Ca(2+) dependent and a Ca(2+) independent manner. In Echinococcus granulosus (Hydatid tapeworm), this protein is Severin (AG8).